We begin with the raw amino-acid sequence, 483 residues long: Myocilin (483 aa).

An N-terminal signal peptide occupies residues 1 to 18 (MPTAQLLLLACLLWGLEA). A glycan (N-linked (GlcNAc...) asparagine) is linked at N43. The stretch at 51–162 (GQAMSAIQDL…SQEVARLRRG (112 aa)) forms a coiled coil. Positions 153 to 179 (SQEVARLRRGQCPQAHSSSQDVPAGSR) are disordered. The Olfactomedin-like domain maps to 223–482 (GCGELVWVGE…MVTYDIRLSK (260 aa)). A disulfide bond links C224 and C412. Positions 359, 407, 408, 456, and 457 each coordinate Ca(2+). The Microbody targeting signal motif lies at 481-483 (SKM).

Homodimer (via N-terminus). Can also form higher oligomers. Interacts with OLFM3, FN1, NRCAM, GLDN and NFASC. Interacts (via N-terminus) with MYL2. Interacts with SFRP1, FRZB, FZD7, FZD10, FZD1 and WIF1; regulates Wnt signaling. Interacts with SNTA1; regulates muscle hypertrophy. Interacts with ERBB2 and ERBB3; activates ERBB2-ERBB3 signaling pathway. Interacts with SNCG; affects its secretion and its aggregation. N-glycosylated. Post-translationally, palmitoylated. In terms of processing, undergoes a calcium-dependent proteolytic cleavage at Arg-205 by CAPN2 in the endoplasmic reticulum. The result is the production of two fragments, one of 35 kDa containing the C-terminal olfactomedin-like domain, and another of 20 kDa containing the N-terminal leucine zipper-like domain. As to expression, expressed in optic nerve head, ciliary body and retina.

It localises to the secreted. It is found in the golgi apparatus. The protein resides in the cytoplasmic vesicle. The protein localises to the extracellular space. Its subcellular location is the extracellular matrix. It localises to the extracellular exosome. It is found in the mitochondrion. The protein resides in the mitochondrion intermembrane space. The protein localises to the mitochondrion inner membrane. Its subcellular location is the mitochondrion outer membrane. It localises to the rough endoplasmic reticulum. It is found in the cell projection. The protein resides in the cilium. The protein localises to the endoplasmic reticulum. In terms of biological role, secreted glycoprotein regulating the activation of different signaling pathways in adjacent cells to control different processes including cell adhesion, cell-matrix adhesion, cytoskeleton organization and cell migration. Promotes substrate adhesion, spreading and formation of focal contacts. Negatively regulates cell-matrix adhesion and stress fiber assembly through Rho protein signal transduction. Modulates the organization of actin cytoskeleton by stimulating the formation of stress fibers through interactions with components of Wnt signaling pathways. Promotes cell migration through activation of PTK2 and the downstream phosphatidylinositol 3-kinase signaling. Plays a role in bone formation and promotes osteoblast differentiation in a dose-dependent manner through mitogen-activated protein kinase signaling. Mediates myelination in the peripheral nervous system through ERBB2/ERBB3 signaling. Plays a role as a regulator of muscle hypertrophy through the components of dystrophin-associated protein complex. Involved in positive regulation of mitochondrial depolarization. Plays a role in neurite outgrowth. May participate in the obstruction of fluid outflow in the trabecular meshwork. This chain is Myocilin (MYOC), found in Canis lupus familiaris (Dog).